Here is a 506-residue protein sequence, read N- to C-terminus: Maturase K (506 aa).

The protein belongs to the intron maturase 2 family. MatK subfamily.

The protein resides in the plastid. Its subcellular location is the chloroplast. Functionally, usually encoded in the trnK tRNA gene intron. Probably assists in splicing its own and other chloroplast group II introns. The chain is Maturase K from Pisum sativum (Garden pea).